Consider the following 403-residue polypeptide: MNAESCSLILSYISSAPAGNLVLNCTATTNKQTLEANLKSAVYQRYPEFLEDWTNVCVHIIHSYFPKDADYWNVDKLYTSVNRITTLEQSKVVGKEIKNGFTFDAENSTASLENDLQPQFRSHALFMVGSAGPLFSSTARTSRLDSRLPDGGIIAKPVALLPTPSVANSQEYTLDKLSPPSTAKPPASVIEFNPSLAKLPTVKYLQSGPFSSIAPYKNSSSSVIPDSSFHSVACYRASSHYKEAPVEKSIDIDIIQNNLSLLEEDSWTSVPIQGELVELNKLLQHLQLLQNQRITSHNVLSDEERQISVQVQNLILKLAKDYDMSPEDFLMDDFTLSLTQYGAFYRGTLPLSAQPLELPSQQLLRSQSNAALRSNSLSMNGSLSPSSTNVPLQSYRRTTKSRR.

Positions 376–389 (SLSMNGSLSPSSTN) are enriched in low complexity. The interval 376–403 (SLSMNGSLSPSSTNVPLQSYRRTTKSRR) is disordered. A Phosphoserine modification is found at Ser384.

As to quaternary structure, component of the RSC complex composed of at least arp9, arp42, rsc1, rsc4, rsc7, rsc9, rsc58, sfh1, snf21, ssr1, ssr2, ssr3 and ssr4. The complex interacts with histone and histone variant components of centromeric chromatin.

The protein localises to the cytoplasm. It localises to the nucleus. In terms of biological role, component of the chromatin structure remodeling complex (RSC), which is involved in transcription regulation and nucleosome positioning. Controls particularly membrane and organelle development genes. The polypeptide is Chromatin structure-remodeling complex subunit rsc58 (rsc58) (Schizosaccharomyces pombe (strain 972 / ATCC 24843) (Fission yeast)).